The sequence spans 199 residues: 7-methyl-GTP pyrophosphatase (199 aa).

Catalysis depends on Asp73, which acts as the Proton acceptor.

Belongs to the Maf family. YceF subfamily. It depends on a divalent metal cation as a cofactor.

It is found in the cytoplasm. The catalysed reaction is N(7)-methyl-GTP + H2O = N(7)-methyl-GMP + diphosphate + H(+). Functionally, nucleoside triphosphate pyrophosphatase that hydrolyzes 7-methyl-GTP (m(7)GTP). May have a dual role in cell division arrest and in preventing the incorporation of modified nucleotides into cellular nucleic acids. This is 7-methyl-GTP pyrophosphatase from Bordetella pertussis (strain Tohama I / ATCC BAA-589 / NCTC 13251).